The primary structure comprises 181 residues: Transmembrane protein 154 (181 aa).

Positions 1–22 are cleaved as a signal peptide; that stretch reads MTVPCAALVLALGLAFGQSSQG. The interval 19 to 47 is disordered; the sequence is SSQGNDEESEYSGQSITEEENSEDETTRS. The Extracellular segment spans residues 23–74; that stretch reads NDEESEYSGQSITEEENSEDETTRSALATVTTEALAENVNSTHTNDTSNQVE. A helical transmembrane segment spans residues 75-95; sequence FILMVAIPLAALLILLFMVLI. Residues 96-181 lie on the Cytoplasmic side of the membrane; the sequence is ATYFKSKRPK…PNPSPSDNES (86 aa). Positions 103-122 are disordered; that stretch reads RPKQEPSSQGSQSALQTHEL. The segment covering 107 to 118 has biased composition (polar residues); sequence EPSSQGSQSALQ. Tyr160 carries the post-translational modification Phosphotyrosine. Residues 161-181 form a disordered region; the sequence is ECLPTLKEEKEPNPSPSDNES. Ser177 carries the phosphoserine modification.

It is found in the membrane. The polypeptide is Transmembrane protein 154 (Tmem154) (Mus musculus (Mouse)).